Reading from the N-terminus, the 137-residue chain is Putative pre-16S rRNA nuclease (137 aa).

The protein belongs to the YqgF nuclease family.

It is found in the cytoplasm. In terms of biological role, could be a nuclease involved in processing of the 5'-end of pre-16S rRNA. This is Putative pre-16S rRNA nuclease from Bacillus cereus (strain 03BB102).